Reading from the N-terminus, the 754-residue chain is tRNA(Met) cytidine acetyltransferase TmcA (754 aa).

Positions 181-202 (GISFDAAPPRVPTEKDRRSPRR) are disordered. Residues 192–202 (PTEKDRRSPRR) show a composition bias toward basic and acidic residues. ATP is bound by residues Gln-212, 236–245 (GRGKSSAAGL), and Arg-383. An N-acetyltransferase domain is found at 418-603 (VSYRALSPDD…YSALMTRPLS (186 aa)). Residues 529–531 (IAT), 536–542 (RSSGLGS), and Glu-568 contribute to the acetyl-CoA site.

The protein belongs to the RNA cytidine acetyltransferase family. TmcA subfamily.

Its subcellular location is the cytoplasm. It catalyses the reaction cytidine(34) in elongator tRNA(Met) + acetyl-CoA + ATP + H2O = N(4)-acetylcytidine(34) in elongator tRNA(Met) + ADP + phosphate + CoA + H(+). In terms of biological role, catalyzes the formation of N(4)-acetylcytidine (ac(4)C) at the wobble position of tRNA(Met), by using acetyl-CoA as an acetyl donor and ATP (or GTP). This is tRNA(Met) cytidine acetyltransferase TmcA from Haloferax volcanii (strain ATCC 29605 / DSM 3757 / JCM 8879 / NBRC 14742 / NCIMB 2012 / VKM B-1768 / DS2) (Halobacterium volcanii).